A 486-amino-acid polypeptide reads, in one-letter code: Cardiolipin synthase A (486 aa).

A run of 2 helical transmembrane segments spans residues 3–23 (TFYT…IAGV) and 38–58 (MAWL…YLSV). PLD phosphodiesterase domains follow at residues 219–246 (MDLR…VDPR) and 399–426 (EGGL…DMRS). Residues His224, Lys226, Asp231, His404, Lys406, and Asp411 contribute to the active site.

This sequence belongs to the phospholipase D family. Cardiolipin synthase subfamily. ClsA sub-subfamily.

It is found in the cell inner membrane. It carries out the reaction 2 a 1,2-diacyl-sn-glycero-3-phospho-(1'-sn-glycerol) = a cardiolipin + glycerol. In terms of biological role, catalyzes the reversible phosphatidyl group transfer from one phosphatidylglycerol molecule to another to form cardiolipin (CL) (diphosphatidylglycerol) and glycerol. This Cronobacter sakazakii (strain ATCC BAA-894) (Enterobacter sakazakii) protein is Cardiolipin synthase A.